We begin with the raw amino-acid sequence, 156 residues long: Deoxyuridine 5'-triphosphate nucleotidohydrolase (156 aa).

Substrate is bound by residues 76–78 (RSG), Asn-89, 93–95 (TVD), and Lys-103.

Belongs to the dUTPase family. Mg(2+) serves as cofactor.

The catalysed reaction is dUTP + H2O = dUMP + diphosphate + H(+). It participates in pyrimidine metabolism; dUMP biosynthesis; dUMP from dCTP (dUTP route): step 2/2. This enzyme is involved in nucleotide metabolism: it produces dUMP, the immediate precursor of thymidine nucleotides and it decreases the intracellular concentration of dUTP so that uracil cannot be incorporated into DNA. This is Deoxyuridine 5'-triphosphate nucleotidohydrolase from Rhizobium johnstonii (strain DSM 114642 / LMG 32736 / 3841) (Rhizobium leguminosarum bv. viciae).